The chain runs to 449 residues: Trigger factor (449 aa).

One can recognise a PPIase FKBP-type domain in the interval 173–258 (GDRVTVDFVG…MKKVEWPHLP (86 aa)).

This sequence belongs to the FKBP-type PPIase family. Tig subfamily.

It is found in the cytoplasm. The enzyme catalyses [protein]-peptidylproline (omega=180) = [protein]-peptidylproline (omega=0). Functionally, involved in protein export. Acts as a chaperone by maintaining the newly synthesized protein in an open conformation. Functions as a peptidyl-prolyl cis-trans isomerase. This is Trigger factor from Burkholderia thailandensis (strain ATCC 700388 / DSM 13276 / CCUG 48851 / CIP 106301 / E264).